A 566-amino-acid chain; its full sequence is Rho GTPase-activating protein gacH (566 aa).

Disordered stretches follow at residues Met1–Thr56, Leu65–Lys84, Ser128–Ser168, and Lys322–Asn366. Low complexity predominate over residues Ser14 to Ser35. Residues Pro36–Thr56 show a composition bias toward polar residues. Low complexity predominate over residues Leu65–Asn83. Over residues Asp130–Asn141 the composition is skewed to acidic residues. Residues Asn142–Asn160 are compositionally biased toward low complexity. Polar residues predominate over residues Lys327–Thr337. The segment covering Ser345–Gln356 has biased composition (low complexity). The Rho-GAP domain maps to Gly369–Tyr564.

The protein localises to the cytoplasm. Its function is as follows. Rho GTPase-activating protein involved in the signal transduction pathway. The protein is Rho GTPase-activating protein gacH (gacH) of Dictyostelium discoideum (Social amoeba).